The chain runs to 276 residues: Elongation factor Ts, mitochondrial (276 aa).

It belongs to the EF-Ts family.

The protein resides in the mitochondrion. Associates with the EF-Tu.GDP complex and induces the exchange of GDP to GTP. It remains bound to the aminoacyl-tRNA.EF-Tu.GTP complex up to the GTP hydrolysis stage on the ribosome. This chain is Elongation factor Ts, mitochondrial, found in Leishmania braziliensis.